The sequence spans 1320 residues: Probable inactive ATP-dependent zinc metalloprotease FTSHI 5, chloroplastic (1320 aa).

The N-terminal 43 residues, 1–43, are a transit peptide targeting the chloroplast; the sequence is MDFISASSLSSPFSTQLSPIYLSSGIVSLKPRHRVKNRNFGSR. 3 helical membrane-spanning segments follow: residues 571–591, 633–653, and 695–715; these read LYLK…WIPM, NIND…IIPY, and FQWF…LYHV. 824 to 831 contacts ATP; it reads GERGTGKT.

It in the N-terminal section; belongs to the AAA ATPase family. This sequence in the C-terminal section; belongs to the peptidase M41 family. As to quaternary structure, oligomer.

It localises to the plastid. It is found in the chloroplast membrane. Its function is as follows. Required for plastid development during embryogenesis. Might be involved in chaperone functions or play a structural role in the thylakoid FtsH complex. The chain is Probable inactive ATP-dependent zinc metalloprotease FTSHI 5, chloroplastic from Arabidopsis thaliana (Mouse-ear cress).